Here is a 303-residue protein sequence, read N- to C-terminus: UDP-N-acetylenolpyruvoylglucosamine reductase (303 aa).

Residues 32-212 form the FAD-binding PCMH-type domain; sequence IGGKADLFLN…EQETKEYLAK (181 aa). Residue R176 is part of the active site. Catalysis depends on S226, which acts as the Proton donor. Residue E296 is part of the active site.

It belongs to the MurB family. FAD serves as cofactor.

The protein localises to the cytoplasm. The enzyme catalyses UDP-N-acetyl-alpha-D-muramate + NADP(+) = UDP-N-acetyl-3-O-(1-carboxyvinyl)-alpha-D-glucosamine + NADPH + H(+). Its pathway is cell wall biogenesis; peptidoglycan biosynthesis. Cell wall formation. The protein is UDP-N-acetylenolpyruvoylglucosamine reductase of Desulforamulus reducens (strain ATCC BAA-1160 / DSM 100696 / MI-1) (Desulfotomaculum reducens).